Consider the following 263-residue polypeptide: 3-methyl-2-oxobutanoate hydroxymethyltransferase (263 aa).

Residues Asp45 and Asp84 each contribute to the Mg(2+) site. 3-methyl-2-oxobutanoate-binding positions include Asp45–Ser46, Asp84, and Lys112. A Mg(2+)-binding site is contributed by Glu114. Glu180 serves as the catalytic Proton acceptor.

This sequence belongs to the PanB family. As to quaternary structure, homodecamer; pentamer of dimers. Requires Mg(2+) as cofactor.

It localises to the cytoplasm. The enzyme catalyses 3-methyl-2-oxobutanoate + (6R)-5,10-methylene-5,6,7,8-tetrahydrofolate + H2O = 2-dehydropantoate + (6S)-5,6,7,8-tetrahydrofolate. It participates in cofactor biosynthesis; (R)-pantothenate biosynthesis; (R)-pantoate from 3-methyl-2-oxobutanoate: step 1/2. Functionally, catalyzes the reversible reaction in which hydroxymethyl group from 5,10-methylenetetrahydrofolate is transferred onto alpha-ketoisovalerate to form ketopantoate. The protein is 3-methyl-2-oxobutanoate hydroxymethyltransferase of Salmonella arizonae (strain ATCC BAA-731 / CDC346-86 / RSK2980).